Here is a 325-residue protein sequence, read N- to C-terminus: uncharacterized protein (325 aa).

2 disordered regions span residues 32 to 65 (LSTP…VPPI) and 99 to 152 (GDSL…ASSG). The region spanning 153 to 291 (LVPSLNRLRI…LFTGVRDGYY (139 aa)) is the Globin domain.

This is an uncharacterized protein from Caenorhabditis elegans.